A 174-amino-acid chain; its full sequence is Large ribosomal subunit protein uL10 (174 aa).

Belongs to the universal ribosomal protein uL10 family. In terms of assembly, part of the ribosomal stalk of the 50S ribosomal subunit. The N-terminus interacts with L11 and the large rRNA to form the base of the stalk. The C-terminus forms an elongated spine to which L12 dimers bind in a sequential fashion forming a multimeric L10(L12)X complex.

Functionally, forms part of the ribosomal stalk, playing a central role in the interaction of the ribosome with GTP-bound translation factors. The chain is Large ribosomal subunit protein uL10 from Anaeromyxobacter sp. (strain K).